The primary structure comprises 103 residues: MQPNDITFFQRFQDDILAGRKTITIRDESESHFKTGDVLRVGRFEDDGYFCTIEVTATSTVTLDTLTEKHAGQENMTLPELKKVIADIYPGQIQFYVIEFKCL.

The region spanning 6–101 (ITFFQRFQDD…QIQFYVIEFK (96 aa)) is the ASCH domain. Lys21 functions as the Proton acceptor in the catalytic mechanism. Residue Thr24 is the Nucleophile of the active site. Glu74 serves as the catalytic Proton donor.

This sequence belongs to the N(4)-acetylcytidine amidohydrolase family.

It catalyses the reaction N(4)-acetylcytidine + H2O = cytidine + acetate + H(+). The enzyme catalyses N(4)-acetyl-2'-deoxycytidine + H2O = 2'-deoxycytidine + acetate + H(+). The catalysed reaction is N(4)-acetylcytosine + H2O = cytosine + acetate + H(+). Catalyzes the hydrolysis of N(4)-acetylcytidine (ac4C). The polypeptide is N(4)-acetylcytidine amidohydrolase (yqfB) (Escherichia coli (strain SMS-3-5 / SECEC)).